Consider the following 291-residue polypeptide: Meteorin (291 aa).

The signal sequence occupies residues 1–21 (MLVAALLCALCCGLLAASARA). Intrachain disulfides connect Cys28-Cys49, Cys80-Cys116, Cys169-Cys240, Cys172-Cys264, and Cys182-Cys286.

This sequence belongs to the meteorin family. Monomer.

It is found in the secreted. In terms of biological role, involved in both glial cell differentiation and axonal network formation during neurogenesis. Promotes astrocyte differentiation and transforms cerebellar astrocytes into radial glia. Also induces axonal extension in small and intermediate neurons of sensory ganglia by activating nearby satellite glia. In Rattus norvegicus (Rat), this protein is Meteorin (Metrn).